A 163-amino-acid polypeptide reads, in one-letter code: Ribosome maturation factor RimP (163 aa).

The protein belongs to the RimP family.

The protein resides in the cytoplasm. In terms of biological role, required for maturation of 30S ribosomal subunits. The sequence is that of Ribosome maturation factor RimP from Streptococcus thermophilus (strain CNRZ 1066).